The primary structure comprises 106 residues: MHHFVPSISLFMASVSFSVFFSHLATSWECSFFRSESFCCKTLFSMVPLINSSFNLSVFLFFNAITSFNLRISCSLLFSSFCRIASVFNKASSWLTMLPPMAPLLS.

The signal sequence occupies residues 1 to 27; it reads MHHFVPSISLFMASVSFSVFFSHLATS. The chain crosses the membrane as a helical span at residues 42–62; sequence TLFSMVPLINSSFNLSVFLFF.

The protein localises to the membrane. This is an uncharacterized protein from Saccharomyces cerevisiae (strain ATCC 204508 / S288c) (Baker's yeast).